We begin with the raw amino-acid sequence, 357 residues long: Mannonate dehydratase (357 aa).

This sequence belongs to the mannonate dehydratase family. The cofactor is Fe(2+). Requires Mn(2+) as cofactor.

It carries out the reaction D-mannonate = 2-dehydro-3-deoxy-D-gluconate + H2O. It functions in the pathway carbohydrate metabolism; pentose and glucuronate interconversion. Functionally, catalyzes the dehydration of D-mannonate. The chain is Mannonate dehydratase from Sorangium cellulosum (strain So ce56) (Polyangium cellulosum (strain So ce56)).